A 250-amino-acid polypeptide reads, in one-letter code: Triosephosphate isomerase (250 aa).

9 to 11 (NWK) provides a ligand contact to substrate. His-95 acts as the Electrophile in catalysis. Residue Glu-167 is the Proton acceptor of the active site. Substrate-binding positions include Gly-173, Ser-212, and 233 to 234 (GG).

The protein belongs to the triosephosphate isomerase family. In terms of assembly, homodimer.

The protein localises to the cytoplasm. The enzyme catalyses D-glyceraldehyde 3-phosphate = dihydroxyacetone phosphate. Its pathway is carbohydrate biosynthesis; gluconeogenesis. It functions in the pathway carbohydrate degradation; glycolysis; D-glyceraldehyde 3-phosphate from glycerone phosphate: step 1/1. Its function is as follows. Involved in the gluconeogenesis. Catalyzes stereospecifically the conversion of dihydroxyacetone phosphate (DHAP) to D-glyceraldehyde-3-phosphate (G3P). The chain is Triosephosphate isomerase from Psychromonas ingrahamii (strain DSM 17664 / CCUG 51855 / 37).